Consider the following 87-residue polypeptide: Phosphoribosyl-ATP pyrophosphatase (87 aa).

It belongs to the PRA-PH family.

It localises to the cytoplasm. The enzyme catalyses 1-(5-phospho-beta-D-ribosyl)-ATP + H2O = 1-(5-phospho-beta-D-ribosyl)-5'-AMP + diphosphate + H(+). It participates in amino-acid biosynthesis; L-histidine biosynthesis; L-histidine from 5-phospho-alpha-D-ribose 1-diphosphate: step 2/9. This Salinibacter ruber (strain DSM 13855 / M31) protein is Phosphoribosyl-ATP pyrophosphatase.